Here is an 85-residue protein sequence, read N- to C-terminus: Anti-neuroexcitation peptide 2 (85 aa).

An N-terminal signal peptide occupies residues 1–21 (MKLSLLLVISASMLIDGLVNA). The LCN-type CS-alpha/beta domain maps to 22 to 82 (DGYIRGSNGC…TWKSESNTCG (61 aa)). Cystine bridges form between cysteine 31–cysteine 81, cysteine 35–cysteine 56, cysteine 42–cysteine 63, and cysteine 46–cysteine 65.

Belongs to the long (4 C-C) scorpion toxin superfamily. Sodium channel inhibitor family. Beta subfamily. In terms of tissue distribution, expressed by the venom gland.

The protein localises to the secreted. In terms of biological role, binds to sodium channels (Nav) and inhibits them. Recombinant ANEP delays the convulsion seizure of insect models by 18% and shows anti-neuroexcitatory activity. The sequence is that of Anti-neuroexcitation peptide 2 from Olivierus martensii (Manchurian scorpion).